The chain runs to 300 residues: Inositol polyphosphate multikinase beta (300 aa).

S78 is subject to Phosphoserine.

It belongs to the inositol phosphokinase (IPK) family. In terms of assembly, interacts with KIN10 and KIN11. In terms of processing, phosphorylated by KIN10. In terms of tissue distribution, expressed in leaves, stems, roots, siliques and flowers. Detected in vascular strands, stigma cells, the abscission zones of fully elongated siliques, the root central cylinder and the root tip.

It localises to the nucleus. The enzyme catalyses 1D-myo-inositol 1,4,5-trisphosphate + 2 ATP = 1D-myo-inositol 1,3,4,5,6-pentakisphosphate + 2 ADP + 2 H(+). It carries out the reaction 1D-myo-inositol 1,3,4,6-tetrakisphosphate + ATP = 1D-myo-inositol 1,3,4,5,6-pentakisphosphate + ADP + H(+). With respect to regulation, down-regulated by KIN10 through its protein phosphorylation. Inositol phosphate kinase with a broad substrate specificity. Phosphorylates inositol 1,4,5-trisphosphate (Ins(1,4,5)P3), inositol 1,4,5,6-tetrakisphosphate (Ins(1,4,5,6)P4), inositol 1,3,4,5-tetrakisphosphate (Ins(1,3,4,5)P4), inositol 1,3,4,6-tetrakisphosphate (Ins(1,3,4,6)P4) and inositol 1,2,3,4,6-pentakisphosphate (Ins(1,2,3,4,6)P5) but not inositol 1,4-bisphosphate (Ins(1,4)P2), inositol 1,3,4-trisphosphate (Ins(1,3,4)P3), inositol 1,2,6-trisphosphate (Ins(1,2,6)P3), inositol 3,4,5,6-tetrakisphosphate (Ins(3,4,5,6)P4), inositol 1,3,4,5,6-pentakisphosphate (Ins(1,3,4,5,6)P5), inositol 1,2,4,5,6-pentakisphosphate (Ins(1,2,4,5,6)P5) or inositol hexakisphosphate (InsP6). Involved in the auxin signaling pathway. Regulates axillary shoot branching and is required for phytate synthesis in seeds. This Arabidopsis thaliana (Mouse-ear cress) protein is Inositol polyphosphate multikinase beta (IPK2b).